Here is a 566-residue protein sequence, read N- to C-terminus: DBIRD complex subunit ZNF326 (566 aa).

2 disordered regions span residues 19–81 (HCGV…ESYD) and 145–180 (RPGF…GRGT). Over residues 59 to 73 (SHGGGGGGGGGGGNR) the composition is skewed to gly residues. Positions 156-165 (SYSSYSSFSS) are enriched in low complexity. The short motif at 240-263 (KRKMMPQPYNKPGGTFIKKPKMTK) is the Bipartite nuclear localization signal element. Positions 314 to 347 (FGDSKGEGKSEEEEKRRIEARREKQRRRREKNSE) are disordered. A compositionally biased stretch (basic and acidic residues) spans 317–335 (SKGEGKSEEEEKRRIEARR). 2 consecutive C2H2 AKAP95-type zinc fingers follow at residues 359–381 (CSFC…SAAH) and 452–475 (CSAC…SPDH). The interval 516–566 (PFEINDQAQEQQTEEEDKAEEPAEGEEEEEEEEEEETEEQTDFTLDHTEDN) is disordered. Residues 527-556 (QTEEEDKAEEPAEGEEEEEEEEEEETEEQT) are compositionally biased toward acidic residues.

It belongs to the AKAP95 family. As to quaternary structure, component of the DBIRD complex.

Its subcellular location is the nucleus. Functionally, core component of the DBIRD complex, a multiprotein complex that acts at the interface between core mRNP particles and RNA polymerase II (RNAPII) and integrates transcript elongation with the regulation of alternative splicing. The sequence is that of DBIRD complex subunit ZNF326 (ZNF326) from Gallus gallus (Chicken).